We begin with the raw amino-acid sequence, 247 residues long: MLYASYMSYVSIKMHASSNGAHISGAETLVDESRAYEFLSSFYQRANTHSKGKPEITTLTIRRIKDADIITIPALEVKCLPALHPSEAHRQVIEQLSNVVSPTIAQMALHTVLNARNMRGAILLCAHTGQRLDPYDPQRGVRASTFGVTPQESAGPTLNKSHFNEALVLASKVMSAPGIVAEICISDDPAYTTGYVTTENTYIRIPHMKDPYSPIGGRVFLLDTRVSTPEDTISYLEQKPVLITGVN.

The protein belongs to the BioW family. As to quaternary structure, homodimer. Mg(2+) is required as a cofactor.

The catalysed reaction is heptanedioate + ATP + CoA = 6-carboxyhexanoyl-CoA + AMP + diphosphate. Its pathway is metabolic intermediate metabolism; pimeloyl-CoA biosynthesis; pimeloyl-CoA from pimelate: step 1/1. In terms of biological role, catalyzes the transformation of pimelate into pimeloyl-CoA with concomitant hydrolysis of ATP to AMP. This Corynebacterium diphtheriae (strain ATCC 700971 / NCTC 13129 / Biotype gravis) protein is 6-carboxyhexanoate--CoA ligase.